We begin with the raw amino-acid sequence, 790 residues long: LPS-assembly protein LptD (790 aa).

The signal sequence occupies residues 1-20; sequence MRMLRWLILSAFSVAGAVQA.

It belongs to the LptD family. As to quaternary structure, component of the lipopolysaccharide transport and assembly complex. Interacts with LptE and LptA.

Its subcellular location is the cell outer membrane. Together with LptE, is involved in the assembly of lipopolysaccharide (LPS) at the surface of the outer membrane. This Bordetella parapertussis (strain 12822 / ATCC BAA-587 / NCTC 13253) protein is LPS-assembly protein LptD.